The sequence spans 132 residues: Secreted RxLR effector protein RXLR-C22 (132 aa).

The first 21 residues, 1-21 (MRSLVWAVIATLIVLTPFSEA), serve as a signal peptide directing secretion. The RxLR-dEER signature appears at 56 to 74 (RKLQSDSVKKGDSTGLEER). Asn116 carries an N-linked (GlcNAc...) asparagine glycan.

It belongs to the RxLR effector family.

The protein resides in the secreted. The protein localises to the host Golgi apparatus. In terms of biological role, secreted effector that does not suppress pattern-triggered immunity (PTI) in plant host. The protein is Secreted RxLR effector protein RXLR-C22 of Plasmopara halstedii (Downy mildew of sunflower).